Here is a 116-residue protein sequence, read N- to C-terminus: Protein aq_1857 (116 aa).

Belongs to the HesB/IscA family.

The polypeptide is Protein aq_1857 (Aquifex aeolicus (strain VF5)).